We begin with the raw amino-acid sequence, 321 residues long: MNKYQTHLLEHSVVKILSGTGKKHIALVAGGMSAEREVSLISSVGVSKALIELGYKVTFIDMGADIAVKLQEINPDIVFNCLHGTYGEDGCLPGLLNIMRIPYTHSGVLSSALAFDKIHSRSCFLKNNINMADSIVVSKSDHINTDPMKRPYVIKPLKQGSSIGVEVIFEEDDFHFIDYDFPYGEDIIIEQYIQGQELQVALLNGKALGVLEIKLLKNRFYDYETKYNKGFAKHVCPAQLPANLYKKLLIESEKIYKTINCKGPVRAEFILEEQTNKLYVLEINTHPGMTPLSIVPEIAAYAGISFTNLIEEIIKMASFES.

Positions 121-315 (RSCFLKNNIN…FTNLIEEIIK (195 aa)) constitute an ATP-grasp domain. 148-199 (MKRPYVIKPLKQGSSIGVEVIFEEDDFHFIDYDFPYGEDIIIEQYIQGQELQ) lines the ATP pocket. 3 residues coordinate Mg(2+): Glu268, Glu282, and Asn284.

It belongs to the D-alanine--D-alanine ligase family. Mg(2+) is required as a cofactor. Mn(2+) serves as cofactor.

The protein localises to the cytoplasm. It carries out the reaction 2 D-alanine + ATP = D-alanyl-D-alanine + ADP + phosphate + H(+). It functions in the pathway cell wall biogenesis; peptidoglycan biosynthesis. Cell wall formation. The sequence is that of D-alanine--D-alanine ligase from Rickettsia typhi (strain ATCC VR-144 / Wilmington).